Here is a 543-residue protein sequence, read N- to C-terminus: Sodium-dependent lysophosphatidylcholine symporter 1 (543 aa).

Residues 1-14 (MAKGEGAESGSAAG) show a composition bias toward low complexity. The disordered stretch occupies residues 1 to 34 (MAKGEGAESGSAAGLLPTSILQSTERPAQVKKEP). Residues 1-40 (MAKGEGAESGSAAGLLPTSILQSTERPAQVKKEPKKKKQQ) are Cytoplasmic-facing. A helical transmembrane segment spans residues 41–70 (LSVCNKLCYALGGAPYQVTGCALGFFLQIY). Residues 71–94 (LLDVAQKDEEVVFCFSSFQVGPFS) are Extracellular-facing. Residues 95-115 (ASIILFVGRAWDAITDPLVGL) form a helical membrane-spanning segment. Residues 116-127 (CISKSPWTCLGR) lie on the Cytoplasmic side of the membrane. Residues 128 to 147 (LMPWIIFSTPLAVIAYFLIW) form a helical membrane-spanning segment. Over 148 to 157 (FVPDFPHGQT) the chain is Extracellular. A helical transmembrane segment spans residues 158–182 (YWYLLFYCLFETMVTCFHVPYSALT). At 183–189 (MFISTEQ) the chain is on the cytoplasmic side. The chain crosses the membrane as a helical span at residues 190 to 221 (TERDSATAYRMTVEVLGTVLGTAIQGQIVGQA). Residues 222–241 (DTPCFQDLNSSTVASQSANH) lie on the Extracellular side of the membrane. Cys225 and Cys473 are joined by a disulfide. N-linked (GlcNAc...) asparagine glycans are attached at residues Asn230 and Asn240. A helical transmembrane segment spans residues 242–275 (THGTTSHRETQKAYLLAAGVIVCIYIICAVILIL). Residues 276–306 (GVREQREPYEAQQSEPIAYFRGLRLVMSHGP) are Cytoplasmic-facing. The chain crosses the membrane as a helical span at residues 307–333 (YIKLITGFLFTSLAFMLVEGNFVLFCT). At 334–344 (YTLGFRNEFQN) the chain is on the extracellular side. The helical transmembrane segment at 345-363 (LLLAIMLSATLTIPIWQWF) threads the bilayer. Residues 364 to 367 (LTRF) lie on the Cytoplasmic side of the membrane. The helical transmembrane segment at 368 to 389 (GKKTAVYVGISSAVPFLILVAL) threads the bilayer. Residues 390-392 (MES) are Extracellular-facing. Residues 393–429 (NLIITYAVAVAAGISVAAAFLLPWSMLPDVIDDFHLK) traverse the membrane as a helical segment. The Cytoplasmic segment spans residues 430 to 439 (QPHFHGTEPI). The helical transmembrane segment at 440–466 (FFSFYVFFTKFASGVSLGISTLSLDFA) threads the bilayer. Residues 467-478 (GYQTRGCSQPER) lie on the Extracellular side of the membrane. The helical transmembrane segment at 479 to 502 (VKFTLNMLVTMAPIVLILLGLLLF) threads the bilayer. The Cytoplasmic portion of the chain corresponds to 503 to 543 (KMYPIDEERRRQNKKALQALRDEASSSGCSETDSTELASIL).

It belongs to the major facilitator superfamily. Interacts with ERVFRD-1/syncytin-2. As to expression, in placenta, associated with trophoblast cells.

Its subcellular location is the cell membrane. It localises to the endoplasmic reticulum membrane. It catalyses the reaction a 1-acyl-sn-glycero-3-phosphocholine(in) + Na(+)(in) = a 1-acyl-sn-glycero-3-phosphocholine(out) + Na(+)(out). The enzyme catalyses 1-(4Z,7Z,10Z,13Z,16Z,19Z-docosahexaenoyl)-sn-glycero-3-phosphocholine(in) + Na(+)(in) = 1-(4Z,7Z,10Z,13Z,16Z,19Z-docosahexaenoyl)-sn-glycero-3-phosphocholine(out) + Na(+)(out). It carries out the reaction 1-(9Z-octadecenoyl)-sn-glycero-3-phosphocholine(in) + Na(+)(in) = 1-(9Z-octadecenoyl)-sn-glycero-3-phosphocholine(out) + Na(+)(out). The catalysed reaction is 1-hexadecanoyl-sn-glycero-3-phosphocholine(in) + Na(+)(in) = 1-hexadecanoyl-sn-glycero-3-phosphocholine(out) + Na(+)(out). It catalyses the reaction a 1-acyl-sn-glycero-3-phosphoethanolamine(in) + Na(+)(in) = a 1-acyl-sn-glycero-3-phosphoethanolamine(out) + Na(+)(out). Its function is as follows. Sodium-dependent lysophosphatidylcholine (LPC) symporter, which plays an essential role for blood-brain barrier formation and function. Specifically expressed in endothelium of the blood-brain barrier of micro-vessels and transports LPC into the brain. Transport of LPC is essential because it constitutes the major mechanism by which docosahexaenoic acid (DHA), an omega-3 fatty acid that is essential for normal brain growth and cognitive function, enters the brain. Transports LPC carrying long-chain fatty acids such LPC oleate and LPC palmitate with a minimum acyl chain length of 14 carbons. Does not transport docosahexaenoic acid in unesterified fatty acid. Specifically required for blood-brain barrier formation and function, probably by mediating lipid transport. Not required for central nervous system vascular morphogenesis. Acts as a transporter for tunicamycin, an inhibitor of asparagine-linked glycosylation. In placenta, acts as a receptor for ERVFRD-1/syncytin-2 and is required for trophoblast fusion. This is Sodium-dependent lysophosphatidylcholine symporter 1 from Homo sapiens (Human).